The chain runs to 344 residues: Arginine N-succinyltransferase (344 aa).

L125 provides a ligand contact to succinyl-CoA. The active-site Proton donor is H229.

Belongs to the arginine N-succinyltransferase family.

The catalysed reaction is succinyl-CoA + L-arginine = N(2)-succinyl-L-arginine + CoA + H(+). The protein operates within amino-acid degradation; L-arginine degradation via AST pathway; L-glutamate and succinate from L-arginine: step 1/5. Functionally, catalyzes the transfer of succinyl-CoA to arginine to produce N(2)-succinylarginine. This chain is Arginine N-succinyltransferase, found in Enterobacter sp. (strain 638).